The primary structure comprises 156 residues: MTQSQHSQSAREALAERIVEAKTRKNLTFEQINEGTGLSVAFTTAALLGQHPLPADAARVVAAKLDLDDDAQRLLQTIPVRGSIPGGVPTDPTIYRFYEIVQVYGSTLKALIHEQFGDGIVSAINFKLDIKKVDDPEGGSRAVITLDGKYLPTKPF.

Residues Arg-96, Glu-99, and Ser-122 contribute to the active site.

It belongs to the cyanase family.

The catalysed reaction is cyanate + hydrogencarbonate + 3 H(+) = NH4(+) + 2 CO2. Functionally, catalyzes the reaction of cyanate with bicarbonate to produce ammonia and carbon dioxide. This is Cyanate hydratase from Burkholderia pseudomallei (strain 1106a).